Here is a 544-residue protein sequence, read N- to C-terminus: Protein nucleotidyltransferase YdiU (544 aa).

ATP-binding residues include G133, G135, R136, K155, D167, G168, R218, and R225. The active-site Proton acceptor is D294. Mg(2+) contacts are provided by N295 and D304. D304 serves as a coordination point for ATP.

The protein belongs to the SELO family. Mg(2+) is required as a cofactor. Requires Mn(2+) as cofactor.

It catalyses the reaction L-seryl-[protein] + ATP = 3-O-(5'-adenylyl)-L-seryl-[protein] + diphosphate. The enzyme catalyses L-threonyl-[protein] + ATP = 3-O-(5'-adenylyl)-L-threonyl-[protein] + diphosphate. It carries out the reaction L-tyrosyl-[protein] + ATP = O-(5'-adenylyl)-L-tyrosyl-[protein] + diphosphate. The catalysed reaction is L-histidyl-[protein] + UTP = N(tele)-(5'-uridylyl)-L-histidyl-[protein] + diphosphate. It catalyses the reaction L-seryl-[protein] + UTP = O-(5'-uridylyl)-L-seryl-[protein] + diphosphate. The enzyme catalyses L-tyrosyl-[protein] + UTP = O-(5'-uridylyl)-L-tyrosyl-[protein] + diphosphate. Functionally, nucleotidyltransferase involved in the post-translational modification of proteins. It can catalyze the addition of adenosine monophosphate (AMP) or uridine monophosphate (UMP) to a protein, resulting in modifications known as AMPylation and UMPylation. The polypeptide is Protein nucleotidyltransferase YdiU (Cupriavidus metallidurans (strain ATCC 43123 / DSM 2839 / NBRC 102507 / CH34) (Ralstonia metallidurans)).